Reading from the N-terminus, the 473-residue chain is Hexaprenyl pyrophosphate synthase, mitochondrial (473 aa).

Isopentenyl diphosphate is bound by residues K84, R87, and H186. D193 and D197 together coordinate Mg(2+). R202 lines the an all-trans-polyprenyl diphosphate pocket. R203 is a binding site for isopentenyl diphosphate. Residues K323, T324, Q361, and K378 each coordinate an all-trans-polyprenyl diphosphate.

It belongs to the FPP/GGPP synthase family. Mg(2+) is required as a cofactor.

Its subcellular location is the mitochondrion inner membrane. Its pathway is cofactor biosynthesis; ubiquinone biosynthesis. Functionally, assembly of polyisoprenoid side chains. The polyprenyl synthase of coenzyme Q biosynthesis catalyzes the formation from isopentenyl diphosphate of all trans-polyprenyl pyrophosphates generally ranging in length of between 6 and 10 isoprene units depending on the species. The polypeptide is Hexaprenyl pyrophosphate synthase, mitochondrial (COQ1) (Saccharomyces cerevisiae (strain ATCC 204508 / S288c) (Baker's yeast)).